The primary structure comprises 385 residues: MAALSRVRWLTRALVAAPNPGAWRSLCTSTVAQASSRTQGEDVRVEGAFPVTMLPGDGVGPELMHAVKEVFKAASVPVEFQEHHLSEVQNMASEEKLEQVLSSMKENKVAIIGKIHTPMEYKGELASYDMRLRRKLDLFANVVHVKSLPGYKTRHNNLDLVIIREQTEGEYSSLEHESARGVIECLKIVTRTKSQRIAKFAFDYATKKGRGKVTAVHKANIMKLGDGLFLQCCEEVAELYPKIKFEKMIIDNCCMQLVQNPYQFDVLVMPNLYGNIIDNLAAGLVGGAGVVPGESYSAEYAVFETGARHPFAQAVGRNIANPTAMLLSASNMLRHLNLEHHSNMIAEAVKKVIKVGKVRTRDMGGYSTTTDFIKSVIGHLHPYGG.

A mitochondrion-targeting transit peptide spans 1–33 (MAALSRVRWLTRALVAAPNPGAWRSLCTSTVAQ). Residue Lys199 is modified to N6-acetyllysine.

The protein belongs to the isocitrate and isopropylmalate dehydrogenases family. As to quaternary structure, heterooligomer of subunits alpha (IDH3A), beta (IDH3B), and gamma (IDH3G) in the apparent ratio of 2:1:1. The heterodimer containing one IDH3A and one IDH3B subunit and the heterodimer containing one IDH3A and one IDH3G subunit assemble into a heterotetramer (which contains two subunits of IDH3A, one of IDH3B and one of IDH3G) and further into the heterooctamer. Isoform A is predominant in heart muscle; also found in brain, kidney and liver. Isoform B is present in kidney and liver.

It is found in the mitochondrion. Its activity is regulated as follows. The heterotetramer and the heterodimer composed of IDH3A and IDH3G subunits can be allosterically activated by citrate (CIT) or/and ADP, and the two activators can act independently or synergistically. The heterodimer composed of IDH3A and IDH3B subunits cannot be allosterically regulated and the allosteric regulation of the heterotetramer is through the IDH3G subunit and not the IDH3B subunit. The IDH3G subunit contains the allosteric site which consists of a CIT-binding site and an ADP-binding site, and the binding of CIT and ADP causes conformational changes at the allosteric site which are transmitted to the active site in the catalytic subunit (IDH3A) through a cascade of conformational changes at the heterodimer interface, leading to stabilization of the isocitrate-binding at the active site and thus activation of the enzyme. ATP can activate the heterotetramer and the heterodimer composed of IDH3A and IDH3G subunits at low concentrations but inhibits their activities at high concentrations, whereas ATP exhibits only inhibitory effect on the heterodimer composed of IDH3A and IDH3B subunits. Its function is as follows. Plays a structural role to facilitate the assembly and ensure the full activity of the enzyme catalyzing the decarboxylation of isocitrate (ICT) into alpha-ketoglutarate. The heterodimer composed of the alpha (IDH3A) and beta (IDH3B) subunits and the heterodimer composed of the alpha (IDH3A) and gamma (IDH3G) subunits, have considerable basal activity but the full activity of the heterotetramer (containing two subunits of IDH3A, one of IDH3B and one of IDH3G) requires the assembly and cooperative function of both heterodimers. This is Isocitrate dehydrogenase [NAD] subunit beta, mitochondrial (IDH3B) from Bos taurus (Bovine).